A 303-amino-acid chain; its full sequence is Vesicle-trafficking protein SEC22c (303 aa).

The Cytoplasmic portion of the chain corresponds to 1–183 (MSMILFASIV…EPAPNLRMKP (183 aa)). The Longin domain maps to 8–119 (SIVRVRDGLP…YAFLEFDSVI (112 aa)). A helical transmembrane segment spans residues 184-204 (VTALGVLSLVLNIMCAALNLI). Residues 205 to 223 (RGVHLAEHSLQVAQEEVGN) lie on the Lumenal side of the membrane. A helical membrane pass occupies residues 224–244 (ILAFFIPSVACIVQCYLYLFY). At 245–248 (SPAR) the chain is on the cytoplasmic side. A helical transmembrane segment spans residues 249 to 269 (TLKVLLMLASICLGNAYLHGL). Position 270 (Arg-270) is a topological domain, lumenal. The chain crosses the membrane as a helical span at residues 271-291 (NTWQILFHVGVAFLSSYQILT). At 292–303 (RQLQERQSDYGV) the chain is on the cytoplasmic side.

The protein belongs to the synaptobrevin family.

It is found in the endoplasmic reticulum membrane. May be involved in vesicle transport between the ER and the Golgi complex. The sequence is that of Vesicle-trafficking protein SEC22c (Sec22c) from Mus musculus (Mouse).